The chain runs to 498 residues: Glycerol kinase (498 aa).

Thr-11 is a binding site for ADP. ATP contacts are provided by Thr-11, Ser-12, and Ser-13. Thr-11 is a sn-glycerol 3-phosphate binding site. Residue Arg-15 coordinates ADP. The sn-glycerol 3-phosphate site is built by Arg-81, Glu-82, Tyr-133, and Asp-242. Arg-81, Glu-82, Tyr-133, Asp-242, and Gln-243 together coordinate glycerol. Residues Thr-264 and Gly-307 each contribute to the ADP site. ATP is bound by residues Thr-264, Gly-307, Gln-311, and Gly-408. Positions 408 and 412 each coordinate ADP.

This sequence belongs to the FGGY kinase family.

It catalyses the reaction glycerol + ATP = sn-glycerol 3-phosphate + ADP + H(+). Its pathway is polyol metabolism; glycerol degradation via glycerol kinase pathway; sn-glycerol 3-phosphate from glycerol: step 1/1. With respect to regulation, inhibited by fructose 1,6-bisphosphate (FBP). In terms of biological role, key enzyme in the regulation of glycerol uptake and metabolism. Catalyzes the phosphorylation of glycerol to yield sn-glycerol 3-phosphate. The protein is Glycerol kinase of Ralstonia nicotianae (strain ATCC BAA-1114 / GMI1000) (Ralstonia solanacearum).